Reading from the N-terminus, the 623-residue chain is Procollagen galactosyltransferase 1 (623 aa).

The signal sequence occupies residues 1 to 30; the sequence is MAAAPRACKGHGRPLPVLLLLLLLALPPLG. N-linked (GlcNAc...) asparagine glycosylation is found at Asn-97, Asn-185, and Asn-382. Residues 589–607 show a composition bias toward basic and acidic residues; the sequence is RAKSQKMREQQALSREAKN. The disordered stretch occupies residues 589–623; that stretch reads RAKSQKMREQQALSREAKNSDVLQSPLDSAARDEL. Positions 620-623 match the Prevents secretion from ER motif; the sequence is RDEL.

It belongs to the glycosyltransferase 25 family. In terms of processing, N-glycosylated.

Its subcellular location is the endoplasmic reticulum lumen. It carries out the reaction (5R)-5-hydroxy-L-lysyl-[collagen] + UDP-alpha-D-galactose = (5R)-5-O-(beta-D-galactosyl)-5-hydroxy-L-lysyl-[collagen] + UDP + H(+). Its function is as follows. Beta-galactosyltransferase that transfers beta-galactose to hydroxylysine residues of type I collagen. By acting on collagen glycosylation, facilitates the formation of collagen triple helix. Also involved in the biosynthesis of collagen type IV. In Bos taurus (Bovine), this protein is Procollagen galactosyltransferase 1 (COLGALT1).